We begin with the raw amino-acid sequence, 92 residues long: Elongation factor 1-beta (92 aa).

This sequence belongs to the EF-1-beta/EF-1-delta family.

Functionally, promotes the exchange of GDP for GTP in EF-1-alpha/GDP, thus allowing the regeneration of EF-1-alpha/GTP that could then be used to form the ternary complex EF-1-alpha/GTP/AAtRNA. The sequence is that of Elongation factor 1-beta from Korarchaeum cryptofilum (strain OPF8).